Consider the following 876-residue polypeptide: DNA topoisomerase 1 (876 aa).

The Toprim domain maps to 3 to 150 (KSLVIVESPA…RYKRVVFNEI (148 aa)). E9 contacts Mg(2+). The segment at 37 to 69 (LPTAGQTATPTGKAAAASTKKASTTDKEQQKRE) is disordered. The span at 38–58 (PTAGQTATPTGKAAAASTKKA) shows a compositional bias: low complexity. Over residues 59–69 (STTDKEQQKRE) the composition is skewed to basic and acidic residues. D119 lines the Mg(2+) pocket. Positions 166 to 582 (NMDGVNAQQA…EFFADFSRDL (417 aa)) constitute a Topo IA-type catalytic domain. The segment at 200–205 (SAGRVQ) is interaction with DNA. Y327 acts as the O-(5'-phospho-DNA)-tyrosine intermediate in catalysis. 2 consecutive C4-type zinc fingers follow at residues 668-695 (CPICETAMDAYLIDDKRKLHVCGNNPNC) and 717-742 (CDKCGSDMVLKNGRFGKYMGCTNDAC).

This sequence belongs to the type IA topoisomerase family. In terms of assembly, monomer. Mg(2+) is required as a cofactor.

It catalyses the reaction ATP-independent breakage of single-stranded DNA, followed by passage and rejoining.. Its function is as follows. Releases the supercoiling and torsional tension of DNA, which is introduced during the DNA replication and transcription, by transiently cleaving and rejoining one strand of the DNA duplex. Introduces a single-strand break via transesterification at a target site in duplex DNA. The scissile phosphodiester is attacked by the catalytic tyrosine of the enzyme, resulting in the formation of a DNA-(5'-phosphotyrosyl)-enzyme intermediate and the expulsion of a 3'-OH DNA strand. The free DNA strand then undergoes passage around the unbroken strand, thus removing DNA supercoils. Finally, in the religation step, the DNA 3'-OH attacks the covalent intermediate to expel the active-site tyrosine and restore the DNA phosphodiester backbone. In Vibrio cholerae serotype O1 (strain ATCC 39315 / El Tor Inaba N16961), this protein is DNA topoisomerase 1.